The chain runs to 351 residues: Cytochrome c biogenesis protein CcsA (351 aa).

The next 8 helical transmembrane spans lie at 17-37 (VLFL…LPAI), 38-58 (NALG…LLGA), 68-88 (LSNL…VHLI), 97-117 (LVGV…TLTL), 143-163 (MMLS…FLVI), 259-279 (IIGL…VWAN), 286-306 (WSWD…AAYL), and 320-340 (AILA…VNLL).

This sequence belongs to the CcmF/CycK/Ccl1/NrfE/CcsA family. May interact with ccs1.

The protein localises to the cellular thylakoid membrane. In terms of biological role, required during biogenesis of c-type cytochromes (cytochrome c6 and cytochrome f) at the step of heme attachment. This Trichormus variabilis (strain ATCC 29413 / PCC 7937) (Anabaena variabilis) protein is Cytochrome c biogenesis protein CcsA.